A 126-amino-acid chain; its full sequence is DNA-directed RNA polymerase subunit omega (126 aa).

This sequence belongs to the RNA polymerase subunit omega family. In terms of assembly, the RNAP catalytic core consists of 2 alpha, 1 beta, 1 beta' and 1 omega subunit. When a sigma factor is associated with the core the holoenzyme is formed, which can initiate transcription.

The enzyme catalyses RNA(n) + a ribonucleoside 5'-triphosphate = RNA(n+1) + diphosphate. Functionally, promotes RNA polymerase assembly. Latches the N- and C-terminal regions of the beta' subunit thereby facilitating its interaction with the beta and alpha subunits. The polypeptide is DNA-directed RNA polymerase subunit omega (Rickettsia felis (strain ATCC VR-1525 / URRWXCal2) (Rickettsia azadi)).